Consider the following 785-residue polypeptide: Protein SEY1 (785 aa).

A disordered region spans residues 1-31 (MASAAPINLRAQDTPYVPPTSLPTSSSQTGS). Over 1–689 (MASAAPINLR…KRSTVASIAQ (689 aa)) the chain is Cytoplasmic. Positions 22-31 (LPTSSSQTGS) are enriched in low complexity. Positions 61–281 (GFSYNIVAVF…SSDYLFKPAY (221 aa)) constitute a GB1/RHD3-type G domain. Residue 71–78 (GSQSTGKS) coordinates GTP. The stretch at 458 to 482 (SWEEELELLRDEIRAVADQCRKDET) forms a coiled coil. A helical transmembrane segment spans residues 690–710 (IPYWIYGVLVVLGWNEAMLVL). Topologically, residues 711-713 (FNP) are lumenal. A helical membrane pass occupies residues 714-734 (LYFAFLLLAMATSYIIAQLGL). Residues 735 to 785 (VGPLFQVTRTVGSEIQRQATARLREHFSQPVLAEPVQVGPSRDREEVGQIQ) lie on the Cytoplasmic side of the membrane.

This sequence belongs to the TRAFAC class dynamin-like GTPase superfamily. GB1/RHD3 GTPase family. RHD3 subfamily.

Its subcellular location is the endoplasmic reticulum membrane. Cooperates with the reticulon proteins and tubule-shaping DP1 family proteins to generate and maintain the structure of the tubular endoplasmic reticulum network. Has GTPase activity, which is required for its function in ER organization. The chain is Protein SEY1 from Laccaria bicolor (strain S238N-H82 / ATCC MYA-4686) (Bicoloured deceiver).